The following is a 677-amino-acid chain: Methionine--tRNA ligase (677 aa).

The 'HIGH' region signature appears at 15–25; the sequence is PYANGSIHLGH. Positions 146, 149, 159, and 162 each coordinate Zn(2+). Positions 333 to 337 match the 'KMSKS' region motif; that stretch reads KMSKS. Lys-336 serves as a coordination point for ATP. In terms of domain architecture, tRNA-binding spans 575 to 677; the sequence is DFAKVDLRVA…AGAKPGHQVK (103 aa).

The protein belongs to the class-I aminoacyl-tRNA synthetase family. MetG type 1 subfamily. As to quaternary structure, homodimer. The cofactor is Zn(2+).

It is found in the cytoplasm. The catalysed reaction is tRNA(Met) + L-methionine + ATP = L-methionyl-tRNA(Met) + AMP + diphosphate. Functionally, is required not only for elongation of protein synthesis but also for the initiation of all mRNA translation through initiator tRNA(fMet) aminoacylation. The polypeptide is Methionine--tRNA ligase (Escherichia coli O127:H6 (strain E2348/69 / EPEC)).